Here is a 321-residue protein sequence, read N- to C-terminus: Acetyl-coenzyme A carboxylase carboxyl transferase subunit alpha (321 aa).

The CoA carboxyltransferase C-terminal domain maps to 39 to 293 (RLQQKSQTLA…RRALGDSLRQ (255 aa)).

Belongs to the AccA family. Acetyl-CoA carboxylase is a heterohexamer composed of biotin carboxyl carrier protein (AccB), biotin carboxylase (AccC) and two subunits each of ACCase subunit alpha (AccA) and ACCase subunit beta (AccD).

The protein localises to the cytoplasm. The enzyme catalyses N(6)-carboxybiotinyl-L-lysyl-[protein] + acetyl-CoA = N(6)-biotinyl-L-lysyl-[protein] + malonyl-CoA. It functions in the pathway lipid metabolism; malonyl-CoA biosynthesis; malonyl-CoA from acetyl-CoA: step 1/1. In terms of biological role, component of the acetyl coenzyme A carboxylase (ACC) complex. First, biotin carboxylase catalyzes the carboxylation of biotin on its carrier protein (BCCP) and then the CO(2) group is transferred by the carboxyltransferase to acetyl-CoA to form malonyl-CoA. The polypeptide is Acetyl-coenzyme A carboxylase carboxyl transferase subunit alpha (Bordetella avium (strain 197N)).